An 86-amino-acid chain; its full sequence is Cell division topological specificity factor (86 aa).

The protein belongs to the MinE family.

Prevents the cell division inhibition by proteins MinC and MinD at internal division sites while permitting inhibition at polar sites. This ensures cell division at the proper site by restricting the formation of a division septum at the midpoint of the long axis of the cell. The polypeptide is Cell division topological specificity factor (Aliivibrio salmonicida (strain LFI1238) (Vibrio salmonicida (strain LFI1238))).